The sequence spans 156 residues: SsrA-binding protein (156 aa).

A disordered region spans residues 127–156 (GKKKYDKREDLKKKDAKRDVDRAMRDRQKY). Basic and acidic residues predominate over residues 132 to 156 (DKREDLKKKDAKRDVDRAMRDRQKY).

The protein belongs to the SmpB family.

The protein localises to the cytoplasm. Functionally, required for rescue of stalled ribosomes mediated by trans-translation. Binds to transfer-messenger RNA (tmRNA), required for stable association of tmRNA with ribosomes. tmRNA and SmpB together mimic tRNA shape, replacing the anticodon stem-loop with SmpB. tmRNA is encoded by the ssrA gene; the 2 termini fold to resemble tRNA(Ala) and it encodes a 'tag peptide', a short internal open reading frame. During trans-translation Ala-aminoacylated tmRNA acts like a tRNA, entering the A-site of stalled ribosomes, displacing the stalled mRNA. The ribosome then switches to translate the ORF on the tmRNA; the nascent peptide is terminated with the 'tag peptide' encoded by the tmRNA and targeted for degradation. The ribosome is freed to recommence translation, which seems to be the essential function of trans-translation. The protein is SsrA-binding protein of Exiguobacterium sp. (strain ATCC BAA-1283 / AT1b).